The following is a 479-amino-acid chain: F-box protein SKIP17 (479 aa).

One can recognise an F-box domain in the interval 92-138 (NSNSWSLPPELTIKVFSMLDTKSMMQAAVCCTMFNKCAMDRLCYSHI). Residues 435–479 (EMMEAEDDEVDEEDDSDDDTDDVSDEDESENDDDMGMGFDVDYLL) form a disordered region. The segment covering 437–469 (MEAEDDEVDEEDDSDDDTDDVSDEDESENDDDM) has biased composition (acidic residues).

As to quaternary structure, part of a SCF (ASK-cullin-F-box) protein ligase complex. Interacts with SPK1B/ASK2.

The protein localises to the nucleus. It participates in protein modification; protein ubiquitination. Its function is as follows. Component of SCF(ASK-cullin-F-box) E3 ubiquitin ligase complexes, which may mediate the ubiquitination and subsequent proteasomal degradation of target proteins. In Arabidopsis thaliana (Mouse-ear cress), this protein is F-box protein SKIP17 (SKIP17).